The sequence spans 62 residues: Teretoxin Tan1.1 (62 aa).

Residues 1 to 21 (MSCFPVLFVMMLLVSQSVWAF) form the signal peptide. Residues 22-38 (PGPETRDGSVQDAESRR) constitute a propeptide that is removed on maturation.

This sequence belongs to the teretoxin A (TA) superfamily. In terms of processing, contains 2 disulfide bonds. In terms of tissue distribution, expressed by the venom duct.

Its subcellular location is the secreted. This chain is Teretoxin Tan1.1, found in Terebra anilis (Auger snail).